A 179-amino-acid chain; its full sequence is Alkyl hydroperoxide reductase AhpD (179 aa).

Cysteine 130 (proton donor) is an active-site residue. An intrachain disulfide couples cysteine 130 to cysteine 133. Cysteine 133 acts as the Cysteine sulfenic acid (-SOH) intermediate in catalysis.

The protein belongs to the AhpD family. In terms of assembly, homotrimer.

It catalyses the reaction N(6)-[(R)-dihydrolipoyl]-L-lysyl-[lipoyl-carrier protein] + a hydroperoxide = N(6)-[(R)-lipoyl]-L-lysyl-[lipoyl-carrier protein] + an alcohol + H2O. Antioxidant protein with alkyl hydroperoxidase activity. Required for the reduction of the AhpC active site cysteine residues and for the regeneration of the AhpC enzyme activity. This chain is Alkyl hydroperoxide reductase AhpD, found in Nocardia farcinica (strain IFM 10152).